A 541-amino-acid polypeptide reads, in one-letter code: T-complex protein 1 subunit epsilon (541 aa).

A2 carries the N-acetylalanine modification. Residue K20 forms a Glycyl lysine isopeptide (Lys-Gly) (interchain with G-Cter in SUMO2) linkage. At S26 the chain carries Phosphoserine. Residue G53 participates in ADP binding. G53 serves as a coordination point for ATP. D104 lines the Mg(2+) pocket. ADP contacts are provided by G105, T106, T107, and S175. ATP is bound by residues T106 and T107. Glycyl lysine isopeptide (Lys-Gly) (interchain with G-Cter in SUMO2) cross-links involve residues K210, K214, K265, K275, and K279. Position 346 is a phosphoserine (S346). A Glycyl lysine isopeptide (Lys-Gly) (interchain with G-Cter in SUMO2) cross-link involves residue K392. 4 residues coordinate ADP: G422, D492, E508, and K513. An ATP-binding site is contributed by G422. S539 carries the post-translational modification Phosphoserine.

The protein belongs to the TCP-1 chaperonin family. Component of the chaperonin-containing T-complex (TRiC), a hexadecamer composed of two identical back-to-back stacked rings enclosing a protein folding chamber. Each ring is made up of eight different subunits: TCP1/CCT1, CCT2, CCT3, CCT4, CCT5, CCT6A/CCT6, CCT7, CCT8. Interacts with PACRG. Interacts with DNAAF4. Interacts with DLEC1. Interacts with SPMAP2. Post-translationally, ubiquitinated by the DCX(DCAF12) complex specifically recognizes the diglutamate (Glu-Glu) at the C-terminus, leading to its degradation.

The protein resides in the cytoplasm. The protein localises to the cytoskeleton. It localises to the microtubule organizing center. It is found in the centrosome. The enzyme catalyses ATP + H2O = ADP + phosphate + H(+). Component of the chaperonin-containing T-complex (TRiC), a molecular chaperone complex that assists the folding of actin, tubulin and other proteins upon ATP hydrolysis. The TRiC complex mediates the folding of WRAP53/TCAB1, thereby regulating telomere maintenance. As part of the TRiC complex may play a role in the assembly of BBSome, a complex involved in ciliogenesis regulating transports vesicles to the cilia. This is T-complex protein 1 subunit epsilon (CCT5) from Pongo abelii (Sumatran orangutan).